The sequence spans 138 residues: Ribulose bisphosphate carboxylase small subunit (138 aa).

It belongs to the RuBisCO small chain family. In terms of assembly, heterohexadecamer of 8 large and 8 small subunits.

It localises to the plastid. The protein localises to the chloroplast. Functionally, ruBisCO catalyzes two reactions: the carboxylation of D-ribulose 1,5-bisphosphate, the primary event in carbon dioxide fixation, as well as the oxidative fragmentation of the pentose substrate in the photorespiration process. Both reactions occur simultaneously and in competition at the same active site. Although the small subunit is not catalytic it is essential for maximal activity. This chain is Ribulose bisphosphate carboxylase small subunit, found in Pyropia haitanensis (Red seaweed).